A 1089-amino-acid chain; its full sequence is Electroneutral sodium bicarbonate exchanger 1 (1089 aa).

The Extracellular segment spans residues 1–476; that stretch reads MPAGSNEPDG…DYRDALSLQC (476 aa). The segment at 55–90 is disordered; that stretch reads LGRQSHRHHRTHGQKHRRRGGRGKGASQGEEGLEAL. Basic residues predominate over residues 58 to 76; it reads QSHRHHRTHGQKHRRRGGR. Residues 477 to 497 traverse the membrane as a helical segment; sequence LASFLFLYCACMSPVITFGGL. Over 498–505 the chain is Cytoplasmic; it reads LGEATEGR. Residues 506 to 526 traverse the membrane as a helical segment; sequence ISAIESLFGASMTGIAYSLFA. Over 527-563 the chain is Extracellular; that stretch reads GQPLTILGSTGPVLVFEKILFKFCKDYALSYLSLRAL. Residues 564–584 form a helical membrane-spanning segment; it reads IGLWTAFLCIVLVATDASSLV. Residues 585 to 593 lie on the Cytoplasmic side of the membrane; that stretch reads CYITRFTEE. The helical transmembrane segment at 594–614 threads the bilayer; the sequence is AFASLICIIFIYEAIEKLIHL. Residues 615 to 685 lie on the Extracellular side of the membrane; it reads AETYPIHMHS…EFMGSACGHH (71 aa). Intrachain disulfides connect cysteine 634–cysteine 682 and cysteine 636–cysteine 670. The N-linked (GlcNAc) asparagine glycan is linked to asparagine 644. The helical transmembrane segment at 686–706 threads the bilayer; the sequence is GPYTPDVLFWSCILFFATFIV. The Cytoplasmic portion of the chain corresponds to 707-729; sequence SSTLKTFKTSRYFPTRVRSMVSD. The chain crosses the membrane as a helical span at residues 730–750; sequence FAVFLTIFTMVVLDFLIGVPS. Residues 751 to 776 lie on the Extracellular side of the membrane; the sequence is PKLQVPNVFKPTRDDRGWFINPIGPN. A helical transmembrane segment spans residues 777 to 797; it reads PWWTVIAAIIPALLCTILIFM. Residues 798-822 are Cytoplasmic-facing; the sequence is DQQITAVIINRKEHKLKKGCGYHLD. A helical membrane pass occupies residues 823–843; the sequence is LLMVAVMLGVCSIMGLPWFVA. The Extracellular segment spans residues 844–879; sequence ATVLSITHVNSLKLESECSAPGEQPKFLGIREQRVT. A helical transmembrane segment spans residues 880-900; sequence GLMIFVLMGCSVFMTAVLKFI. Residues 901–902 lie on the Cytoplasmic side of the membrane; it reads PM. A helical transmembrane segment spans residues 903-923; sequence PVLYGVFLYMGVSSLQGIQFF. Over 924–960 the chain is Extracellular; sequence DRLKLFGMPAKHQPDFIYLRHVPLRKVHLFTLVQLTC. The helical transmembrane segment at 961–981 threads the bilayer; sequence LVLLWVIKASPAAIVFPMMVL. Residues 982–1089 are Cytoplasmic-facing; the sequence is ALVFVRKVMD…GNTKEKSPFN (108 aa).

Belongs to the anion exchanger (TC 2.A.31) family. As to quaternary structure, homodimer. As to expression, expressed in the hippocampal neurons (at protein level). Highly expressed in brain with lower levels in lung, kidney and heart. In the kidney, there is high expression in the inner medulla, localized to the inner medullary collecting duct. In the brain, there seems to be three transcripts each having a different expression pattern. The smaller 3kb transcript has highest expression levels in the thalamus and the largest 9.5kb transcript has highest levels in the substantia nigra. The middle transcript of 4.4kb, which is also the main transcript in kidney, is highly expressed in thalamus. Hence, the highest levels are observed in the thalamus, amygdala and caudate nucleus and very low expression was seen in the corpus callosum.

It localises to the cell membrane. It is found in the apical cell membrane. Its subcellular location is the basolateral cell membrane. The protein localises to the cytoplasmic vesicle. The protein resides in the secretory vesicle. It localises to the synaptic vesicle membrane. The catalysed reaction is 2 hydrogencarbonate(out) + chloride(in) + Na(+)(out) = 2 hydrogencarbonate(in) + chloride(out) + Na(+)(in). Its function is as follows. Mediates electroneutral sodium- and carbonate-dependent chloride-HCO3(-) exchange with a Na(+):HCO3(-) stoichiometry of 2:1. Plays a major role in pH regulation in neurons. Mediates sodium reabsorption in the renal cortical collecting ducts. This is Electroneutral sodium bicarbonate exchanger 1 from Mus musculus (Mouse).